The chain runs to 504 residues: 2,3-bisphosphoglycerate-independent phosphoglycerate mutase (504 aa).

Residues aspartate 11 and serine 61 each coordinate Mn(2+). The active-site Phosphoserine intermediate is serine 61. Substrate-binding positions include histidine 122, 152–153, arginine 183, arginine 189, 255–258, and lysine 329; these read RD and RNDR. The Mn(2+) site is built by aspartate 396, histidine 400, aspartate 437, histidine 438, and histidine 455.

The protein belongs to the BPG-independent phosphoglycerate mutase family. As to quaternary structure, monomer. The cofactor is Mn(2+).

The enzyme catalyses (2R)-2-phosphoglycerate = (2R)-3-phosphoglycerate. The protein operates within carbohydrate degradation; glycolysis; pyruvate from D-glyceraldehyde 3-phosphate: step 3/5. In terms of biological role, catalyzes the interconversion of 2-phosphoglycerate and 3-phosphoglycerate. The chain is 2,3-bisphosphoglycerate-independent phosphoglycerate mutase from Bacteroides thetaiotaomicron (strain ATCC 29148 / DSM 2079 / JCM 5827 / CCUG 10774 / NCTC 10582 / VPI-5482 / E50).